The following is a 476-amino-acid chain: Amidophosphoribosyltransferase (476 aa).

The propeptide occupies methionine 1–glutamate 11. Residue cysteine 12 is the Nucleophile of the active site. Residues cysteine 12–glutamate 231 enclose the Glutamine amidotransferase type-2 domain. Cysteine 247 is a binding site for [4Fe-4S] cluster. Mg(2+)-binding residues include serine 294, aspartate 356, and aspartate 357. Residues cysteine 393, cysteine 448, and cysteine 451 each contribute to the [4Fe-4S] cluster site.

It in the C-terminal section; belongs to the purine/pyrimidine phosphoribosyltransferase family. Homotetramer. It depends on Mg(2+) as a cofactor. The cofactor is [4Fe-4S] cluster.

The enzyme catalyses 5-phospho-beta-D-ribosylamine + L-glutamate + diphosphate = 5-phospho-alpha-D-ribose 1-diphosphate + L-glutamine + H2O. It functions in the pathway purine metabolism; IMP biosynthesis via de novo pathway; N(1)-(5-phospho-D-ribosyl)glycinamide from 5-phospho-alpha-D-ribose 1-diphosphate: step 1/2. With respect to regulation, allosterically regulated; subject to end product regulation by purine nucleotides. Catalyzes the formation of phosphoribosylamine from phosphoribosylpyrophosphate (PRPP) and glutamine. In Bacillus subtilis (strain 168), this protein is Amidophosphoribosyltransferase.